The following is a 314-amino-acid chain: Ferredoxin:CoB-CoM heterodisulfide reductase subunit B (314 aa).

The protein belongs to the HdrB family. In terms of assembly, the ferredoxin:CoB-CoM heterodisulfide reductase is composed of three subunits; HdrA1, HdrB1 and HdrC1. [4Fe-4S] cluster is required as a cofactor.

The protein localises to the cytoplasm. The catalysed reaction is coenzyme B + coenzyme M + 2 oxidized [2Fe-2S]-[ferredoxin] = coenzyme M-coenzyme B heterodisulfide + 2 reduced [2Fe-2S]-[ferredoxin] + 2 H(+). Its pathway is cofactor metabolism; coenzyme M-coenzyme B heterodisulfide reduction; coenzyme B and coenzyme M from coenzyme M-coenzyme B heterodisulfide: step 1/1. Its function is as follows. Part of a complex that catalyzes the reversible reduction of CoM-S-S-CoB to the thiol-coenzymes H-S-CoM (coenzyme M) and H-S-CoB (coenzyme B). Probably involved in methylotrophic methanogenesis but not in aceticlastic methanogenesis. The protein is Ferredoxin:CoB-CoM heterodisulfide reductase subunit B of Methanosarcina acetivorans (strain ATCC 35395 / DSM 2834 / JCM 12185 / C2A).